A 236-amino-acid chain; its full sequence is C-&gt;U-editing enzyme APOBEC-1 (236 aa).

The region spanning 10-134 (GDPTLRRRIE…QQNRQGLRDL (125 aa)) is the CMP/dCMP-type deaminase domain. His-61 contributes to the Zn(2+) binding site. Glu-63 (proton donor) is an active-site residue. Zn(2+) is bound by residues Cys-93 and Cys-96.

This sequence belongs to the cytidine and deoxycytidylate deaminase family. As to quaternary structure, homodimer. Interacts with A1CF; form an mRNA editing complex. Interacts with RBM47; form an mRNA editing complex. Found in a complex with CELF2/CUGBP2 and A1CF. Interacts with HNRPAB. Interacts with SYNCRIP. The cofactor is Zn(2+). As to expression, expressed exclusively in the small intestine.

It localises to the cytoplasm. Its subcellular location is the nucleus. It carries out the reaction a cytidine in mRNA + H2O + H(+) = a uridine in mRNA + NH4(+). It catalyses the reaction cytidine(6666) in apoB mRNA + H2O + H(+) = uridine(6666) in apoB mRNA + NH4(+). In terms of biological role, cytidine deaminase catalyzing the cytidine to uridine postranscriptional editing of a variety of mRNAs. Form complexes with cofactors that confer differential editing activity and selectivity. Responsible for the postranscriptional editing of a CAA codon for Gln to a UAA codon for stop in the apolipoprotein B mRNA. Also involved in CGA (Arg) to UGA (Stop) editing in the NF1 mRNA. May also play a role in the epigenetic regulation of gene expression by participating in DNA demethylation. This chain is C-&gt;U-editing enzyme APOBEC-1, found in Homo sapiens (Human).